A 242-amino-acid chain; its full sequence is Uridylate kinase (242 aa).

ATP is bound at residue 11 to 14 (KLSG). Positions 19–24 (GDKGVG) are involved in allosteric activation by GTP. UMP is bound at residue Gly53. The ATP site is built by Gly54 and Arg58. Residues Asp73 and 134-141 (IGSPYFST) each bind UMP. ATP is bound by residues Asn162, Tyr168, and Asp171.

This sequence belongs to the UMP kinase family. As to quaternary structure, homohexamer.

The protein resides in the cytoplasm. The enzyme catalyses UMP + ATP = UDP + ADP. It functions in the pathway pyrimidine metabolism; CTP biosynthesis via de novo pathway; UDP from UMP (UMPK route): step 1/1. Its activity is regulated as follows. Allosterically activated by GTP. Inhibited by UTP. Its function is as follows. Catalyzes the reversible phosphorylation of UMP to UDP. This Streptococcus agalactiae serotype Ia (strain ATCC 27591 / A909 / CDC SS700) protein is Uridylate kinase.